A 514-amino-acid polypeptide reads, in one-letter code: Glutamate--cysteine ligase (514 aa).

This sequence belongs to the glutamate--cysteine ligase type 1 family. Type 1 subfamily.

It carries out the reaction L-cysteine + L-glutamate + ATP = gamma-L-glutamyl-L-cysteine + ADP + phosphate + H(+). Its pathway is sulfur metabolism; glutathione biosynthesis; glutathione from L-cysteine and L-glutamate: step 1/2. The polypeptide is Glutamate--cysteine ligase (Enterobacter sp. (strain 638)).